Consider the following 127-residue polypeptide: MRHQKSGRKFSRTSAHREAMFKNMAASLFKHELIKTTLPKAKELRRVAEPLITLAKVDSVANRRLAFARLRDNEAVGNLFTILGPRYANRPGGYLRLLKCGFRAGDNAPMAYVELVDRPVVAEAVAE.

This sequence belongs to the bacterial ribosomal protein bL17 family. In terms of assembly, part of the 50S ribosomal subunit. Contacts protein L32.

This Stenotrophomonas maltophilia (strain R551-3) protein is Large ribosomal subunit protein bL17.